Here is a 365-residue protein sequence, read N- to C-terminus: Dihydroorotate dehydrogenase (quinone) (365 aa).

Residues A61–K65 and S85 each bind FMN. K65 contacts substrate. N110–F114 is a binding site for substrate. The FMN site is built by N139 and N170. Position 170 (N170) interacts with substrate. The active-site Nucleophile is S173. Substrate is bound at residue N175. Residues K214 and S242 each contribute to the FMN site. Residue N243–T244 coordinates substrate. Residues G266, G295, and Y316 to S317 contribute to the FMN site.

This sequence belongs to the dihydroorotate dehydrogenase family. Type 2 subfamily. In terms of assembly, monomer. FMN is required as a cofactor.

The protein localises to the cell membrane. The enzyme catalyses (S)-dihydroorotate + a quinone = orotate + a quinol. The protein operates within pyrimidine metabolism; UMP biosynthesis via de novo pathway; orotate from (S)-dihydroorotate (quinone route): step 1/1. Catalyzes the conversion of dihydroorotate to orotate with quinone as electron acceptor. This chain is Dihydroorotate dehydrogenase (quinone), found in Bradyrhizobium diazoefficiens (strain JCM 10833 / BCRC 13528 / IAM 13628 / NBRC 14792 / USDA 110).